Here is a 426-residue protein sequence, read N- to C-terminus: MTRIEMAKKGIITEEVRQVAQEEGVFPEELSQNIAEGRVVITRNILRNIKPLGIGKGLRTKINANIGTSRDKTDIQEELEKLDIAVKYGADAVMDLSTGGPLTEMRRAILKHSSVSIGTVPIYEVAVRAIEKYGNIVKMTVDDIFNVIEEHAKDGVDFVTVHCGVTKKIVEMLKSGDRVLPIVSRGGSILADWICYHDKENPLYEYFDRLLELAKKYDLTLSLGDGLRPGCLADATDRYQLIELITIGKLKDIAISEGVQCIIEGPGHLPLNHVETNIKLQKSICKEAPFYVLGPLVTDCAMGYDHIAAAIGGALAGMYGADFLCYVTPSEHIRLPDKEDVKEGVIASRIAAHAADIAKGYAKAWQRDNKMAEARRNFDWQSQISLSFDPDKVHSMRSERPPLEDEKVCSMCGEFCAIKISRRAVE.

Substrate is bound by residues Asn65, Met94, Tyr123, His162, 184–186 (SRG), 225–228 (DGLR), and Glu264. A Zn(2+)-binding site is contributed by His268. Tyr291 is a substrate binding site. Position 332 (His332) interacts with Zn(2+). 3 residues coordinate [4Fe-4S] cluster: Cys409, Cys412, and Cys416.

The protein belongs to the ThiC family. [4Fe-4S] cluster is required as a cofactor.

It catalyses the reaction 5-amino-1-(5-phospho-beta-D-ribosyl)imidazole + S-adenosyl-L-methionine = 4-amino-2-methyl-5-(phosphooxymethyl)pyrimidine + CO + 5'-deoxyadenosine + formate + L-methionine + 3 H(+). It participates in cofactor biosynthesis; thiamine diphosphate biosynthesis. Its function is as follows. Catalyzes the synthesis of the hydroxymethylpyrimidine phosphate (HMP-P) moiety of thiamine from aminoimidazole ribotide (AIR) in a radical S-adenosyl-L-methionine (SAM)-dependent reaction. This is Phosphomethylpyrimidine synthase from Thermodesulfovibrio yellowstonii (strain ATCC 51303 / DSM 11347 / YP87).